A 158-amino-acid chain; its full sequence is Small ribosomal subunit protein uS7 (158 aa).

It belongs to the universal ribosomal protein uS7 family. As to quaternary structure, part of the 30S ribosomal subunit. Contacts proteins S9 and S11.

Its function is as follows. One of the primary rRNA binding proteins, it binds directly to 16S rRNA where it nucleates assembly of the head domain of the 30S subunit. Is located at the subunit interface close to the decoding center, probably blocks exit of the E-site tRNA. The protein is Small ribosomal subunit protein uS7 of Leptospira biflexa.